The chain runs to 501 residues: L-ornithine N(5)-monooxygenase (501 aa).

Residues 1–16 (MNGTSTTGNGFTNGTN) are compositionally biased toward low complexity. The tract at residues 1–40 (MNGTSTTGNGFTNGTNYPVPKLELQPETTSTSPTRAQTHP) is disordered. Over residues 26 to 37 (PETTSTSPTRAQ) the composition is skewed to polar residues. Residues 92–100 (EKQSNFAWH) and Gln-111 contribute to the FAD site. Lys-116 is a substrate binding site. Val-177 is an FAD binding site. 263–266 (SGQS) contacts NADP(+). Residues 304-307 (NELF) and Asn-334 each bind substrate. Position 334-336 (334-336 (NYS)) interacts with NADP(+). An FAD-binding site is contributed by 476-478 (SLL). Ser-479 contacts substrate.

This sequence belongs to the lysine N(6)-hydroxylase/L-ornithine N(5)-oxygenase family. In terms of assembly, homotetramer. The cofactor is FAD.

It carries out the reaction L-ornithine + NADPH + O2 = N(5)-hydroxy-L-ornithine + NADP(+) + H2O. The catalysed reaction is L-ornithine + NADH + O2 = N(5)-hydroxy-L-ornithine + NAD(+) + H2O. It participates in siderophore biosynthesis. L-ornithine N(5)-monooxygenase; part of the siderophore biosynthetic pathway. Arthroderma benhamiae produces 2 types of extracellular siderophores, ferrichrome C and ferricrocin. The biosynthesis of these siderophores depends on the hydroxylation of ornithine to N(5)-hydroxyornithine, catalyzed by the monooxygenase sidA. The structure of ferricrocin differs from ferrichrome C only by a serine for alanine substitution and the assembly of both siderophores is suggested to be performed by the nonribosomal peptide synthase (NRPS) sidC. This is L-ornithine N(5)-monooxygenase from Arthroderma benhamiae (strain ATCC MYA-4681 / CBS 112371) (Trichophyton mentagrophytes).